Consider the following 388-residue polypeptide: S-adenosylmethionine synthase 1 (388 aa).

Glutamate 11 is a binding site for Mg(2+). Histidine 17 contacts ATP. Glutamate 45 provides a ligand contact to K(+). Residues glutamate 58 and glutamine 101 each contribute to the L-methionine site. Residues 168–170 (DAK), 233–236 (SGRF), aspartate 244, 250–251 (RK), alanine 267, lysine 271, and lysine 275 contribute to the ATP site. L-methionine is bound at residue aspartate 244. Position 275 (lysine 275) interacts with L-methionine.

It belongs to the AdoMet synthase family. In terms of assembly, homotetramer. Requires Mn(2+) as cofactor. The cofactor is Mg(2+). Co(2+) is required as a cofactor. K(+) serves as cofactor. As to expression, mostly in Roots.

The protein localises to the cytoplasm. The catalysed reaction is L-methionine + ATP + H2O = S-adenosyl-L-methionine + phosphate + diphosphate. It functions in the pathway amino-acid biosynthesis; S-adenosyl-L-methionine biosynthesis; S-adenosyl-L-methionine from L-methionine: step 1/1. Functionally, catalyzes the formation of S-adenosylmethionine from methionine and ATP. The reaction comprises two steps that are both catalyzed by the same enzyme: formation of S-adenosylmethionine (AdoMet) and triphosphate, and subsequent hydrolysis of the triphosphate. This chain is S-adenosylmethionine synthase 1 (SAMS1), found in Pinus contorta (Shore pine).